Here is a 259-residue protein sequence, read N- to C-terminus: Formate channel BtFdhC (259 aa).

Topologically, residues 1 to 26 (MAFHKPEQIAELVIEAGVQKVSQTLP) are cytoplasmic. Residues 27-47 (AMLILGFLGGAFISLGFLLNI) traverse the membrane as a helical segment. Over 48–66 (RVLGNLPERWGSLVNVLGG) the chain is Periplasmic. The chain crosses the membrane as a helical span at residues 67–97 (AVFPVGLMLVVLAGGELITGNMMSLSMALYA). The Cytoplasmic segment spans residues 98-108 (KKITLVSVLNN). Residues 109-130 (WVWITFMNFVGAIFVAYCFGHL) traverse the membrane as a helical segment. Residues 131–157 (GGLTEGDYLNKTVAIAEGKLHESFGRT) lie on the Periplasmic side of the membrane. The chain crosses the membrane as a helical span at residues 158–176 (LILAIGCNWLVCLALWLAY). The Cytoplasmic portion of the chain corresponds to 177–187 (GTSDFVGKIIG). Residues 188–216 (IWIPIMAFVVIGFQQVVANMFVISAVIFA) form a helical membrane-spanning segment. The Periplasmic portion of the chain corresponds to 217–227 (GHLTWMDLARN). The helical transmembrane segment at 228–250 (FVPVFIGNVIGGAGFVGFAYFAC) threads the bilayer. Residues 251–259 (YQKQHSNMK) lie on the Cytoplasmic side of the membrane.

It belongs to the FNT transporter (TC 1.A.16) family.

The protein resides in the cell inner membrane. It catalyses the reaction formate(in) = formate(out). Its function is as follows. Acts as a formate transporter. The protein is Formate channel BtFdhC of Bacillus thuringiensis.